The chain runs to 378 residues: Chaperone protein DnaJ (378 aa).

One can recognise a J domain in the interval 5–70 (DYYQILGIPK…EKRTAYDQYG (66 aa)). The CR-type zinc finger occupies 133 to 211 (GTTKEIRIPT…CRGQGRIKTN (79 aa)). Residues Cys-146, Cys-149, Cys-163, Cys-166, Cys-185, Cys-188, Cys-199, and Cys-202 each coordinate Zn(2+). CXXCXGXG motif repeat units follow at residues 146-153 (CKTCYGMG), 163-170 (CSTCHGKG), 185-192 (CPTCNGIG), and 199-206 (CRMCRGQG).

The protein belongs to the DnaJ family. In terms of assembly, homodimer. Requires Zn(2+) as cofactor.

It is found in the cytoplasm. Its function is as follows. Participates actively in the response to hyperosmotic and heat shock by preventing the aggregation of stress-denatured proteins and by disaggregating proteins, also in an autonomous, DnaK-independent fashion. Unfolded proteins bind initially to DnaJ; upon interaction with the DnaJ-bound protein, DnaK hydrolyzes its bound ATP, resulting in the formation of a stable complex. GrpE releases ADP from DnaK; ATP binding to DnaK triggers the release of the substrate protein, thus completing the reaction cycle. Several rounds of ATP-dependent interactions between DnaJ, DnaK and GrpE are required for fully efficient folding. Also involved, together with DnaK and GrpE, in the DNA replication of plasmids through activation of initiation proteins. This Buchnera aphidicola subsp. Schizaphis graminum (strain Sg) protein is Chaperone protein DnaJ.